A 1383-amino-acid chain; its full sequence is Cell surface hyaluronidase (1383 aa).

Residues 1 to 76 form a disordered region; it reads MYAAGSRGHS…QRTPSESRKR (76 aa). The Cytoplasmic portion of the chain corresponds to 1–82; the sequence is MYAAGSRGHS…SRKRKRHKNT (82 aa). Residues serine 10, serine 53, and serine 63 each carry the phosphoserine modification. A helical; Signal-anchor for type II membrane protein transmembrane segment spans residues 83 to 103; sequence FICFAITSFSFFVALAVILGI. Over 104 to 1383 the chain is Extracellular; the sequence is SSKYAPDENC…DLLQQALKVL (1280 aa). The 125-residue stretch at 121–245 folds into the G8 domain; the sequence is RNWDPGQDSA…QRTSWTMLAR (125 aa). The 158-residue stretch at 255–412 folds into the GG-type lectin 1 domain; that stretch reads GSYAFEKDFS…ISLSGFRVDI (158 aa). Residue asparagine 292 is glycosylated (N-linked (GlcNAc...) asparagine). PbH1 repeat units lie at residues 669 to 691, 711 to 733, and 791 to 812; these read HPNN…WYLF, TPLG…FVDK, and GGDI…TFAS. Asparagine 914 and asparagine 1234 each carry an N-linked (GlcNAc...) asparagine glycan. A GG-type lectin 2 domain is found at 1208-1366; sequence KSYLPVRFQS…MEEYGCSRTG (159 aa).

It belongs to the CEMIP family. Ca(2+) is required as a cofactor. As to expression, widely expressed. Strongly expressed in endothelial cells in the subcapsular sinus of lymph nodes and in the liver sinusoid, two primary sites implicated in systemic hyaluronan turnover.

Its subcellular location is the cell membrane. It carries out the reaction Random hydrolysis of (1-&gt;4)-linkages between N-acetyl-beta-D-glucosamine and D-glucuronate residues in hyaluronate.. Functionally, cell surface hyaluronidase that mediates the initial cleavage of extracellular high-molecular-weight hyaluronan into intermediate-size hyaluronan of approximately 5 kDa fragments. Very specific to hyaluronan; not able to cleave chondroitin sulfate or dermatan sulfate. Has an essential function in systemic hyaluronan catabolism and turnover and regulates cell adhesion and migration via hyaluronan degradation at focal adhesion sites. Acts as a regulator of angiogenesis and heart morphogenesis by mediating degradation of extracellular hyaluronan, thereby regulating VEGF signaling. The sequence is that of Cell surface hyaluronidase from Mus musculus (Mouse).